Here is a 1163-residue protein sequence, read N- to C-terminus: DNA-directed RNA polymerase subunit beta'' (1163 aa).

Zn(2+) is bound by residues C16, C87, C94, and C97.

The protein belongs to the RNA polymerase beta' chain family. RpoC2 subfamily. In terms of assembly, in plastids the minimal PEP RNA polymerase catalytic core is composed of four subunits: alpha, beta, beta', and beta''. When a (nuclear-encoded) sigma factor is associated with the core the holoenzyme is formed, which can initiate transcription. The cofactor is Zn(2+).

It localises to the plastid. The protein resides in the chloroplast. It carries out the reaction RNA(n) + a ribonucleoside 5'-triphosphate = RNA(n+1) + diphosphate. DNA-dependent RNA polymerase catalyzes the transcription of DNA into RNA using the four ribonucleoside triphosphates as substrates. This chain is DNA-directed RNA polymerase subunit beta'' (rpoC2), found in Pisum sativum (Garden pea).